A 463-amino-acid chain; its full sequence is Nucleobindin-1 (463 aa).

Residues 1–26 (MPPSGPQGTLLLLPLLLLLLLRAVLA) form the signal peptide. At serine 86 the chain carries Phosphoserine. The residue at position 148 (threonine 148) is a Phosphothreonine. The stretch at 150 to 218 (EARDLELLIQ…QQRRHREHPK (69 aa)) forms a coiled coil. A DNA-binding region spans residues 172 to 218 (HHEEFKRYEMLKEHERRRYLESLGEEQRKEAERRLEEQQRRHREHPK). A compositionally biased stretch (basic and acidic residues) spans 193 to 210 (SLGEEQRKEAERRLEEQQ). The tract at residues 193–221 (SLGEEQRKEAERRLEEQQRRHREHPKVNV) is disordered. The binds to GNAI2 and GNAI3 stretch occupies residues 228–321 (LKEVWEELDG…VTLGEFLAST (94 aa)). EF-hand domains follow at residues 240-275 (PNRFNPKTFFILHDINSDGVLDEQELEALFTKELEK) and 292-327 (ERLRMREHVMKNVDTNQDRLVTLGEFLASTQRKEFG). The Ca(2+) site is built by aspartate 253, asparagine 255, aspartate 257, glutamate 264, aspartate 305, asparagine 307, aspartate 309, and glutamate 316. The short motif at 303 to 333 (NVDTNQDRLVTLGEFLASTQRKEFGDTGEGW) is the GBA element. Positions 341-409 (AYTEEELRRF…KQQQQQQQQQ (69 aa)) form a coiled coil. Positions 368–463 (LSQETEALGR…LPEVEVPQHL (96 aa)) are disordered. Serine 369 is modified (phosphoserine). Residues 439-463 (DQKEVDTSEKKLLERLPEVEVPQHL) are compositionally biased toward basic and acidic residues.

This sequence belongs to the nucleobindin family. Interacts (via GBA motif) with guanine nucleotide-binding protein G(i) alpha subunits GNAI1, GNAI2 and GNAI3 with higher affinity for GNAI1 and GNAI3 than for GNAI2. Preferentially interacts with inactive rather than active GNAI3. Interaction with GNAI3 is inhibited when NUCB1 binds calcium, probably due to a conformational change which renders the GBA motif inaccessible.

Its subcellular location is the golgi apparatus. The protein resides in the cis-Golgi network membrane. The protein localises to the cytoplasm. It is found in the secreted. In terms of biological role, major calcium-binding protein of the Golgi which may have a role in calcium homeostasis. Acts as a non-receptor guanine nucleotide exchange factor which binds to and activates alpha subunits of guanine nucleotide-binding proteins (G proteins). The sequence is that of Nucleobindin-1 (NUCB1) from Pongo abelii (Sumatran orangutan).